The chain runs to 277 residues: 4-deoxy-L-threo-5-hexosulose-uronate ketol-isomerase (277 aa).

Zn(2+) is bound by residues histidine 195, histidine 197, glutamate 202, and histidine 244.

Belongs to the KduI family. Requires Zn(2+) as cofactor.

It carries out the reaction 5-dehydro-4-deoxy-D-glucuronate = 3-deoxy-D-glycero-2,5-hexodiulosonate. It functions in the pathway glycan metabolism; pectin degradation; 2-dehydro-3-deoxy-D-gluconate from pectin: step 4/5. Catalyzes the isomerization of 5-dehydro-4-deoxy-D-glucuronate to 3-deoxy-D-glycero-2,5-hexodiulosonate. The polypeptide is 4-deoxy-L-threo-5-hexosulose-uronate ketol-isomerase (Oceanobacillus iheyensis (strain DSM 14371 / CIP 107618 / JCM 11309 / KCTC 3954 / HTE831)).